A 486-amino-acid polypeptide reads, in one-letter code: Alpha-L-arabinofuranosidase B (486 aa).

Residues 1–25 (MLSLKAVLRFASVAVAVVLPTLAQA) form the signal peptide. N-linked (GlcNAc...) asparagine glycosylation occurs at asparagine 42. Positions 45–342 (LVKQRADPQI…KLYWRSDGTP (298 aa)) are catalytic. Aspartate 51 acts as the Proton acceptor in catalysis. Glutamate 229 acts as the Proton donor in catalysis. 3 N-linked (GlcNAc...) asparagine glycosylation sites follow: asparagine 302, asparagine 416, and asparagine 426. The interval 359-467 (SSADQTLYVG…AGSYLVSGGN (109 aa)) is ABD.

Belongs to the glycosyl hydrolase 43 family.

The protein localises to the secreted. It catalyses the reaction Hydrolysis of terminal non-reducing alpha-L-arabinofuranoside residues in alpha-L-arabinosides.. Its pathway is glycan metabolism; L-arabinan degradation. Functionally, secreted arabinofuranosidase that causes degradation of rice cell wall components during infection. Required for virulence. The chain is Alpha-L-arabinofuranosidase B from Pyricularia oryzae (strain 70-15 / ATCC MYA-4617 / FGSC 8958) (Rice blast fungus).